We begin with the raw amino-acid sequence, 171 residues long: Nudix hydrolase DR_0079 (171 aa).

The Nudix hydrolase domain occupies 32 to 162 (ERVRVVNAFL…EAAKGDLAEL (131 aa)). The Nudix box motif lies at 69 to 91 (GGAVQSGETYEEAFRREAREELN). E85 and E89 together coordinate Mg(2+).

It belongs to the Nudix hydrolase family. Monomer. Requires Mg(2+) as cofactor.

Its activity is regulated as follows. Inhibited by zinc, calcium or copper ions. In terms of biological role, hydrolase that converts various nucleotide triphosphates (NTPs) to the corresponding nucleotide monophosphates and diphosphate, and nucleotide diphosphates to nucleotide monophosphates and inorganic phosphate. Has a marked preference for cytosine ribonucleoside 5'-diphosphate (CDP) and cytosine ribonucleoside 5'-triphosphate (CTP). Has lower activity towards the deoxyribose nucleotides dCDP and dCTP, and towards dGDP, TDP and UDP. The polypeptide is Nudix hydrolase DR_0079 (Deinococcus radiodurans (strain ATCC 13939 / DSM 20539 / JCM 16871 / CCUG 27074 / LMG 4051 / NBRC 15346 / NCIMB 9279 / VKM B-1422 / R1)).